A 124-amino-acid chain; its full sequence is Small ribosomal subunit protein uS12c (124 aa).

2 disordered regions span residues 1–28 and 104–124; these read MPTIQQLVRSERRKINKKTKSPALKSCP and AAGVKDRRKSRSKYGTKKPKS. 2 stretches are compositionally biased toward basic residues: residues 11–20 and 109–124; these read ERRKINKKTK and DRRKSRSKYGTKKPKS.

This sequence belongs to the universal ribosomal protein uS12 family. In terms of assembly, part of the 30S ribosomal subunit.

Its subcellular location is the plastid. The protein localises to the chloroplast. Functionally, with S4 and S5 plays an important role in translational accuracy. Located at the interface of the 30S and 50S subunits. In Porphyra purpurea (Red seaweed), this protein is Small ribosomal subunit protein uS12c (rps12).